A 648-amino-acid chain; its full sequence is Rab11 family-interacting protein 1 (648 aa).

The C2 domain occupies 1–129 (MSLAASAGRG…DQSRRKKQWY (129 aa)). Basic and acidic residues predominate over residues 164 to 188 (SMKDKSRNPFGKLKDKIKGKNKDNT). 3 disordered regions span residues 164–470 (SMKD…GRKG), 483–503 (VRRPEKDAVPVASQWGSSQNP), and 516–555 (VESKCEPKPPVPVPRTPQTRAVKPRPHPVKPMNTTAPKIT). Residues 189–201 (SDTASAIVPSTTP) are compositionally biased toward polar residues. Phosphoserine occurs at positions 205, 209, and 237. Polar residues-rich tracts occupy residues 227 to 242 (PSLQKTPLSQSMSVLP) and 271 to 296 (SSASEVMSQKRTSSTDHTQPNQSNFS). S304, S319, S343, S345, S347, S349, S360, S361, and S386 each carry phosphoserine. The span at 314–323 (DSLSRSNVCI) shows a compositional bias: polar residues. 2 stretches are compositionally biased toward basic and acidic residues: residues 381 to 394 (SDRRLSDSSTKDSM) and 422 to 436 (ATKETKDSKKQESKK). Residue S438 is modified to Phosphoserine. Basic and acidic residues predominate over residues 445–454 (GKKDVAKGSE). Residues 576–638 (KKYQPSDPAF…EETPNILRVP (63 aa)) enclose the FIP-RBD domain. Residues 584-648 (AFAYAQLTHD…AQTGKKAGKM (65 aa)) are necessary for interaction with RAB4A and RAB11A, subcellular location and endosomal recycling.

Homooligomer. Interacts with RAB11A, RAB11B, RAB25, RAB4A and RAB14.

It localises to the recycling endosome. Its subcellular location is the cytoplasmic vesicle. A Rab11 effector protein involved in the endosomal recycling process. Also involved in controlling membrane trafficking along the phagocytic pathway and in phagocytosis. Interaction with RAB14 may function in the process of neurite formation. This chain is Rab11 family-interacting protein 1, found in Rattus norvegicus (Rat).